A 127-amino-acid chain; its full sequence is Small ribosomal subunit protein uS11 (127 aa).

Belongs to the universal ribosomal protein uS11 family. In terms of assembly, part of the 30S ribosomal subunit. Interacts with proteins S7 and S18. Binds to IF-3.

Its function is as follows. Located on the platform of the 30S subunit, it bridges several disparate RNA helices of the 16S rRNA. Forms part of the Shine-Dalgarno cleft in the 70S ribosome. This chain is Small ribosomal subunit protein uS11, found in Ehrlichia ruminantium (strain Gardel).